The sequence spans 122 residues: MIQMQTNLDVADNSGARRVMCIKVLGGSKRKYAGVGDIIVVSVKEAIPRGRVKKGDVMKAVVVRTAKDVRRPDGSVIRFDRNAAVLINNQKEPIGTRIFGPVPRELRARNHMKIISLAPEVL.

It belongs to the universal ribosomal protein uL14 family. Part of the 50S ribosomal subunit. Forms a cluster with proteins L3 and L19. In the 70S ribosome, L14 and L19 interact and together make contacts with the 16S rRNA in bridges B5 and B8.

In terms of biological role, binds to 23S rRNA. Forms part of two intersubunit bridges in the 70S ribosome. The protein is Large ribosomal subunit protein uL14 of Methylobacterium sp. (strain 4-46).